The following is a 163-amino-acid chain: Lipoprotein signal peptidase (163 aa).

The next 3 helical transmembrane spans lie at Phe-8–Met-28, Phe-61–Trp-81, and Phe-93–Tyr-113. Residues Asp-117 and Asp-136 contribute to the active site. Residues Tyr-128–Ile-148 form a helical membrane-spanning segment.

It belongs to the peptidase A8 family.

It localises to the cell inner membrane. It catalyses the reaction Release of signal peptides from bacterial membrane prolipoproteins. Hydrolyzes -Xaa-Yaa-Zaa-|-(S,diacylglyceryl)Cys-, in which Xaa is hydrophobic (preferably Leu), and Yaa (Ala or Ser) and Zaa (Gly or Ala) have small, neutral side chains.. It participates in protein modification; lipoprotein biosynthesis (signal peptide cleavage). Functionally, this protein specifically catalyzes the removal of signal peptides from prolipoproteins. The polypeptide is Lipoprotein signal peptidase (Bartonella henselae (strain ATCC 49882 / DSM 28221 / CCUG 30454 / Houston 1) (Rochalimaea henselae)).